The sequence spans 615 residues: ABC transporter G family member 22 (615 aa).

Residues 31-279 enclose the ABC transporter domain; that stretch reads ITFKDLAYSV…EIGFPFPDQT (249 aa). 67 to 74 serves as a coordination point for ATP; that stretch reads GPSGSGKT. The ABC transmembrane type-2 domain maps to 364–610; that stretch reads SNCLVRFAVA…TMVFLCLHYF (247 aa). 6 consecutive transmembrane segments (helical) span residues 370 to 390, 400 to 420, 442 to 462, 477 to 497, 508 to 528, and 587 to 607; these read FAVA…LGMD, VLFY…SLFI, LALM…LGTI, FFAM…MLII, FAVG…FVPI, and INLI…FLCL.

Belongs to the ABC transporter superfamily. ABCG family. Eye pigment precursor importer (TC 3.A.1.204) subfamily.

The protein localises to the membrane. Functionally, may be involved in cell migration. The chain is ABC transporter G family member 22 (abcG22) from Dictyostelium discoideum (Social amoeba).